A 211-amino-acid polypeptide reads, in one-letter code: tRNA (guanosine(18)-2'-O)-methyltransferase (211 aa).

S-adenosyl-L-methionine-binding residues include Thr-103, Ile-146, and Leu-155.

It belongs to the class IV-like SAM-binding methyltransferase superfamily. RNA methyltransferase TrmH family. As to quaternary structure, homodimer.

It carries out the reaction guanosine(18) in tRNA + S-adenosyl-L-methionine = 2'-O-methylguanosine(18) in tRNA + S-adenosyl-L-homocysteine + H(+). In terms of biological role, catalyzes the 2'-O methylation of guanosine at position 18 in tRNA. Type II methylase, which methylates only a subset of tRNA species. This Aquifex aeolicus (strain VF5) protein is tRNA (guanosine(18)-2'-O)-methyltransferase.